The sequence spans 177 residues: Adenine phosphoribosyltransferase (177 aa).

This sequence belongs to the purine/pyrimidine phosphoribosyltransferase family. In terms of assembly, homodimer.

It is found in the cytoplasm. It catalyses the reaction AMP + diphosphate = 5-phospho-alpha-D-ribose 1-diphosphate + adenine. It functions in the pathway purine metabolism; AMP biosynthesis via salvage pathway; AMP from adenine: step 1/1. Catalyzes a salvage reaction resulting in the formation of AMP, that is energically less costly than de novo synthesis. The protein is Adenine phosphoribosyltransferase of Prosthecochloris aestuarii (strain DSM 271 / SK 413).